Here is a 466-residue protein sequence, read N- to C-terminus: Asparagine--tRNA ligase (466 aa).

It belongs to the class-II aminoacyl-tRNA synthetase family. Homodimer.

The protein localises to the cytoplasm. The enzyme catalyses tRNA(Asn) + L-asparagine + ATP = L-asparaginyl-tRNA(Asn) + AMP + diphosphate + H(+). The protein is Asparagine--tRNA ligase of Shewanella denitrificans (strain OS217 / ATCC BAA-1090 / DSM 15013).